A 234-amino-acid chain; its full sequence is Golgi SNAP receptor complex member 1 (234 aa).

Over 1–212 the chain is Cytoplasmic; the sequence is MSETWEALRK…MQKIKTKKQK (212 aa). Residues 54–121 adopt a coiled-coil conformation; that stretch reads VTTEIEGLIE…RDNVDQVLQR (68 aa). A helical; Anchor for type IV membrane protein membrane pass occupies residues 213-233; it reads NTMILAGVISACLIFTIFWII. Residue N234 is a topological domain, vesicular.

It belongs to the GOSR1 family. In terms of assembly, component of several multiprotein Golgi SNARE complexes.

It localises to the golgi apparatus membrane. Its function is as follows. Involved in transport from the ER to the Golgi apparatus as well as in intra-Golgi transport. It belongs to a super-family of proteins called t-SNAREs or soluble NSF (N-ethylmaleimide-sensitive factor) attachment protein receptor. Cooperates with ykt-6 for proper expression of Golgi-resident proteins. Required along with ykt-6 for normal embryonic development, seam cell division or differentiation, and ray formation. This is Golgi SNAP receptor complex member 1 from Caenorhabditis briggsae.